The primary structure comprises 284 residues: Sulfotransferase 2A6 (284 aa).

Residue 43–48 (KSGTNW) coordinates 3'-phosphoadenylyl sulfate. His-98 serves as the catalytic Proton acceptor. 3'-phosphoadenylyl sulfate contacts are provided by residues Arg-120, Ser-128, Tyr-183, 217 to 222 (SSFQVM), and 246 to 248 (RNG).

This sequence belongs to the sulfotransferase 1 family. As to quaternary structure, oligomer. As to expression, liver, exhibiting a sex-dependent spatial localization in the lobule of the liver.

The protein resides in the cytoplasm. It localises to the cytosol. The catalysed reaction is an alcohol + 3'-phosphoadenylyl sulfate = an alkyl sulfate + adenosine 3',5'-bisphosphate + H(+). The enzyme catalyses glycolithocholate + 3'-phosphoadenylyl sulfate = sulfoglycolithocholate + adenosine 3',5'-bisphosphate + H(+). It carries out the reaction taurolithocholate + 3'-phosphoadenylyl sulfate = taurolithocholate 3-sulfate + adenosine 3',5'-bisphosphate + H(+). It catalyses the reaction 3beta-hydroxyandrost-5-en-17-one + 3'-phosphoadenylyl sulfate = dehydroepiandrosterone 3-sulfate + adenosine 3',5'-bisphosphate + H(+). The catalysed reaction is 3beta-hydroxy-5-cholenate + 3'-phosphoadenylyl sulfate = 3beta-sulfo-5-cholenate + adenosine 3',5'-bisphosphate + H(+). The enzyme catalyses deoxycholate + 3'-phosphoadenylyl sulfate = 3alpha-sulfodeoxycholate + adenosine 3',5'-bisphosphate + H(+). It carries out the reaction glycodeoxycholate + 3'-phosphoadenylyl sulfate = 3alpha-sulfoglycodeoxycholate + adenosine 3',5'-bisphosphate + H(+). It catalyses the reaction taurodeoxycholate + 3'-phosphoadenylyl sulfate = 3alpha-sulfotaurodeoxycholate + adenosine 3',5'-bisphosphate + H(+). In terms of biological role, sulfotransferase that utilizes 3'-phospho-5'-adenylyl sulfate (PAPS) as sulfonate donor to catalyze the sulfonation of the hydroxyl group of hydroxysteroids and bile acids. Prefered substrates are dehydroepiandrosterone (DHEA, also known as 3beta-hydroxyandrost-5-en-17-one) and 3beta-hydroxy-5-cholenoate, but can also catalyze deoxycholate and its conjugates, and lithocholate conjugates, in vitro. The protein is Sulfotransferase 2A6 of Rattus norvegicus (Rat).